A 147-amino-acid chain; its full sequence is Transmembrane protein 210 (147 aa).

The signal sequence occupies residues 1-31 (MAPCPQPESCPAGSPLGLICLSLLLIPASAG). Residues 32–47 (TYCECSLGLSREALIA) lie on the Extracellular side of the membrane. The chain crosses the membrane as a helical span at residues 48-68 (LIVVLAGVSASCFCALVVVAI). Topologically, residues 69 to 147 (GVFRAKGDTC…PPPPPPPLPQ (79 aa)) are cytoplasmic. The disordered stretch occupies residues 128-147 (TMTAPLEPPPPPPPPPPLPQ). The span at 133-147 (LEPPPPPPPPPPLPQ) shows a compositional bias: pro residues.

The protein resides in the membrane. The protein localises to the cytoplasmic vesicle. It localises to the secretory vesicle. It is found in the acrosome. The chain is Transmembrane protein 210 (Tmem210) from Mus musculus (Mouse).